Here is a 1069-residue protein sequence, read N- to C-terminus: RE1-silencing transcription factor (1069 aa).

Residues 32-121 form an interaction with SIN3A region; that stretch reads DLHDLSKAEL…SLELSVVEPQ (90 aa). An interaction with SIN3B region spans residues 43–57; it reads APQLIMLANVALTGE. A disordered region spans residues 85 to 104; that stretch reads SDSEGEGLEESAELKGDPSG. Positions 144–417 are interaction with ZFP90; sequence PVAEDKCKNL…KSKHPTCPSK (274 aa). The C2H2-type 1 zinc-finger motif lies at 158–180; that stretch reads FRCKPCQYEAESEEQFVHHIRVH. Residues 200–211 are required for binding to the neuron-restrictive silencer element; it reads SGASPSEEGEFS. C2H2-type zinc fingers lie at residues 215–237, 247–269, 275–297, 303–325, 331–354, 360–382, and 388–411; these read IRCD…LKHH, YKCI…LRNH, YTCS…VRTH, YKCE…MRTH, FKCD…RQVH, LNCP…VELH, and FNCP…KSKH. Disordered stretches follow at residues 425-737 and 830-1022; these read KLKK…MELP and KASK…GKEG. Residues 451–482 are compositionally biased toward basic and acidic residues; it reads EQAKTKGVDASARRSERPVKGVGKDVPKEKKP. Positions 484-493 are enriched in polar residues; sequence SNASVVQVTT. Basic and acidic residues-rich tracts occupy residues 498 to 511 and 554 to 576; these read SAVE…KHTD and ESKP…KADK. Residues 584 to 600 are compositionally biased toward basic residues; that stretch reads KGGKKTALKTKTAKKGS. The segment covering 630–643 has biased composition (polar residues); that stretch reads AVVTPSGSTQTELS. 2 stretches are compositionally biased toward pro residues: residues 679–706 and 713–734; these read PSPP…PCPM and PSPP…PLPM. Composition is skewed to basic and acidic residues over residues 851-860 and 876-886; these read RREETPKDQE and GGTEEAGESRA. Residues 894 to 904 are compositionally biased toward low complexity; that stretch reads STSALSSEQSS. Basic and acidic residues predominate over residues 930-943; that stretch reads TEQKTDRVPLKDSA. Serine 948 carries the phosphoserine modification. Residues 957–968 are compositionally biased toward low complexity; the sequence is EAAAPAVVASPP. An interaction with RCOR1 region spans residues 981-1059; the sequence is EGIHSHDGSD…HLNRHLVNVY (79 aa). Residues 1032 to 1054 form a C2H2-type 9 zinc finger; it reads FVCIFCDRSFRKEKDYSKHLNRH.

In terms of assembly, isoform 1 and isoform 6 form heterodimers. Isoform 6: Forms homodimers and homooligomers; binds to the neuron-restrictive silencer element (NRSE) as monomer. Interacts with SIN3A, SIN3B and RCOR1. Interacts with CDYL. Interacts with EHMT1 and EHMT2 only in the presence of CDYL. Part of a complex containing at least CDYL, REST, WIZ, SETB1, EHMT1 and EHMT2. Interacts (via zinc-finger DNA-binding domain) with ZFP90 (via N- and C-termini); the interaction inhibits REST repressor activity. Interacts (via C2H2-type zinc finger 5) with PRICKLE1. Interacts with FBXW11 and BTRC. Interacts with USP7. O-glycosylated. Post-translationally, phosphorylated; phosphorylation is required for ubiquitination. In terms of processing, ubiquitinated; ubiquitination is mediated by BTRC and leads to proteasomal degradation in G2 phase. Ubiquitination increases during neuronal differentiation. Deubiquitinated by USP7; leading to its stabilization and promoting the maintenance of neural progenitor cells. In terms of tissue distribution, expressed in the hippocampus including the granule cell layer of the dentate gyrus, the pyramidal cell layers of CA1 and CA3, the apical and basilar dendrite layers of the stratum radiatum and stratum oriens of CA1, the stratum lucidum and stratum oriens of CA3 and in astroglia (at protein level). Expressed in the brain, with the highest levels in the neurons of hippocampus, pons/medulla and midbrain.

It localises to the nucleus. The protein localises to the cytoplasm. Its function is as follows. Transcriptional repressor which binds neuron-restrictive silencer element (NRSE) and represses neuronal gene transcription in non-neuronal cells. Restricts the expression of neuronal genes by associating with two distinct corepressors, SIN3A and RCOR1, which in turn recruit histone deacetylase to the promoters of REST-regulated genes. Mediates repression by recruiting the BHC complex at RE1/NRSE sites which acts by deacetylating and demethylating specific sites on histones, thereby acting as a chromatin modifier. Transcriptional repression by REST-CDYL via the recruitment of histone methyltransferase EHMT2 may be important in transformation suppression. Represses the expression of SRRM4 in non-neural cells to prevent the activation of neural-specific splicing events and to prevent production of REST isoform 6. Repressor activity may be inhibited by forming heterodimers with isoform 6, thereby preventing binding to NRSE or binding to corepressors and leading to derepression of target genes. Also maintains repression of neuronal genes in neural stem cells, and allows transcription and differentiation into neurons by dissociation from RE1/NRSE sites of target genes. Thereby is involved in maintaining the quiescent state of adult hippocampal neural stem cells and preventing premature differentiation into mature neurons. Plays a role in the developmental switch in synaptic NMDA receptor composition during postnatal development, by repressing GRIN2B expression and thereby altering NMDA receptor properties from containing primarily GRIN2B to primarily GRIN2A subunits. Acts as a regulator of osteoblast differentiation. Key repressor of gene expression in hypoxia; represses genes in hypoxia by direct binding to an RE1/NRSE site on their promoter regions. May also function in stress resistance in the brain during aging; possibly by regulating expression of genes involved in cell death and in the stress response. Repressor of gene expression in the hippocampus after ischemia by directly binding to RE1/NRSE sites and recruiting SIN3A and RCOR1 to promoters of target genes, thereby promoting changes in chromatin modifications and ischemia-induced cell death. After ischemia, might play a role in repression of miR-132 expression in hippocampal neurons, thereby leading to neuronal cell death. In terms of biological role, binds to the 3' region of the neuron-restrictive silencer element (NRSE), with lower affinity than full-length REST isoform 1. Exhibits weaker repressor activity compared to isoform 1. May negatively regulate the repressor activity of isoform 1 by binding to isoform 1, thereby preventing its binding to NRSE and leading to derepression of target genes. However, in another study, does not appear to be implicated in repressor activity of a NRSE motif-containing reporter construct nor in inhibitory activity on the isoform 1 transcriptional repressor activity. Post-transcriptional inactivation of REST by SRRM4-dependent alternative splicing into isoform 6 is required in mechanosensory hair cells in the inner ear for derepression of neuronal genes and hearing. This Rattus norvegicus (Rat) protein is RE1-silencing transcription factor (Rest).